The sequence spans 160 residues: Serine-protein kinase RsbW (160 aa).

Belongs to the anti-sigma-factor family.

It catalyses the reaction L-seryl-[protein] + ATP = O-phospho-L-seryl-[protein] + ADP + H(+). The catalysed reaction is L-threonyl-[protein] + ATP = O-phospho-L-threonyl-[protein] + ADP + H(+). Its function is as follows. Negative regulator of sigma-B activity. Phosphorylates and inactivates its specific antagonist protein, RsbV. Upon phosphorylation of RsbV, RsbW is released and binds to sigma-B, thereby blocking its ability to form an RNA polymerase holoenzyme (E-sigma-B). This chain is Serine-protein kinase RsbW, found in Bacillus licheniformis.